The chain runs to 281 residues: Release factor glutamine methyltransferase (281 aa).

Residues 121-125 (GSGTG), Asp-144, and Asn-188 contribute to the S-adenosyl-L-methionine site. 188–191 (NPPY) serves as a coordination point for substrate.

Belongs to the protein N5-glutamine methyltransferase family. PrmC subfamily.

It carries out the reaction L-glutaminyl-[peptide chain release factor] + S-adenosyl-L-methionine = N(5)-methyl-L-glutaminyl-[peptide chain release factor] + S-adenosyl-L-homocysteine + H(+). Its function is as follows. Methylates the class 1 translation termination release factors RF1/PrfA and RF2/PrfB on the glutamine residue of the universally conserved GGQ motif. This is Release factor glutamine methyltransferase from Aquifex aeolicus (strain VF5).